The following is a 357-amino-acid chain: Methylthioribose-1-phosphate isomerase (357 aa).

Residues 49–51 (RGA), arginine 89, and glutamine 197 each bind substrate. The active-site Proton donor is the aspartate 238. 248–249 (NK) contacts substrate.

It belongs to the eIF-2B alpha/beta/delta subunits family. MtnA subfamily.

It carries out the reaction 5-(methylsulfanyl)-alpha-D-ribose 1-phosphate = 5-(methylsulfanyl)-D-ribulose 1-phosphate. It functions in the pathway amino-acid biosynthesis; L-methionine biosynthesis via salvage pathway; L-methionine from S-methyl-5-thio-alpha-D-ribose 1-phosphate: step 1/6. Its function is as follows. Catalyzes the interconversion of methylthioribose-1-phosphate (MTR-1-P) into methylthioribulose-1-phosphate (MTRu-1-P). The chain is Methylthioribose-1-phosphate isomerase from Leptospira biflexa serovar Patoc (strain Patoc 1 / Ames).